The primary structure comprises 56 residues: Large ribosomal subunit protein bL32 (56 aa).

Residues 1–26 (MAVQQNKKSRSKRGMRRSHDALSTAQ) are disordered. The segment covering 7–16 (KKSRSKRGMR) has biased composition (basic residues).

Belongs to the bacterial ribosomal protein bL32 family.

The protein is Large ribosomal subunit protein bL32 of Shewanella baltica (strain OS155 / ATCC BAA-1091).